The chain runs to 345 residues: MLALRKTLLHGRLPAAPPAAAAAAIASRIPALLRRLSSSPGDGQGGDEWGSSWSTGITKEHFDGSDAAVGRPVTSPSKPVSPELAAVRAMDEEDEIFRAMERDNREAKAYVDSWGDRMRETCELLKQVREPGSRGSYLKDSEKQEMYRLHKEDPETYTVERLAKDFRVMRQRVHAILWLKEMEEEEERKLGKPLDDSVEVLLDSCPEFFNSHDREFHVASLPYKPDFKVMPEGWDGTTRDPDEVLYEISMKEDQMLYEEFVQRLQFNKKKVAGEVKCHKYSRRRPDDGWTYMVEKLGAQSKRGSGGGWKFASLPDGSSRPLNDMEKMYVKRETPKRRRRIMAPFK.

A mitochondrion-targeting transit peptide spans 1–43 (MLALRKTLLHGRLPAAPPAAAAAAIASRIPALLRRLSSSPGDG). The interval 36-81 (LSSSPGDGQGGDEWGSSWSTGITKEHFDGSDAAVGRPVTSPSKPVS) is disordered.

In terms of tissue distribution, expressed in roots, stems, leaves and florets.

The protein localises to the mitochondrion. Functionally, essential for fertility (male and female gametophyte functions and development). Required for the integrity of female gametic mitochondria. Involved in embryo apical-basal patterning, and particularly dorsal-ventral patterning, during early embryogenesis, and endosperm free nucleus positioning and development as well as early endosperm development, probably by modulating the expression pattern of related genes (e.g. AL1, MYB3/AL2, CYP78A13/GE, PNH1, HAZ1, MPK6 and OSH1). Has function in triggering of endosperm programmed cell death (PCD) leading to syncytial endosperm cellularization and starchy endosperm cell maturation. Implicated in central vacuole dynamics necessary for microspore development leading to pollen production, and for pollen development and germination. The chain is Protein GAMETE CELL DEFECTIVE 1, mitochondrial from Oryza sativa subsp. japonica (Rice).